Consider the following 99-residue polypeptide: MHVTLVEINVKQDKLDEFIEVFRLNHLGSIKEAGNLRFDVLRDENIPTRFYIYEAYVDENAANTHKQTSHYLKCVEQLESLISEPRKKRSFIGVMPEIK.

The ABM domain occupies 2–91 (HVTLVEINVK…ISEPRKKRSF (90 aa)).

It belongs to the LsrG family. In terms of assembly, homodimer.

The protein resides in the cytoplasm. It catalyses the reaction (2S)-2-hydroxy-3,4-dioxopentyl phosphate = 3-hydroxy-2,4-dioxopentyl phosphate. Functionally, involved in the degradation of phospho-AI-2, thereby terminating induction of the lsr operon and closing the AI-2 signaling cycle. Catalyzes the conversion of (4S)-4-hydroxy-5-phosphonooxypentane-2,3-dione (P-DPD) to 3-hydroxy-5-phosphonooxypentane-2,4-dione (P-HPD). The protein is (4S)-4-hydroxy-5-phosphonooxypentane-2,3-dione isomerase of Photorhabdus laumondii subsp. laumondii (strain DSM 15139 / CIP 105565 / TT01) (Photorhabdus luminescens subsp. laumondii).